A 205-amino-acid polypeptide reads, in one-letter code: Holliday junction branch migration complex subunit RuvA (205 aa).

Residues 1 to 62 (MFEYVTGYVE…EDIMALYGFK (62 aa)) are domain I. Residues 63–141 (TREERLLFTK…DVVPDAFVDL (79 aa)) are domain II. Residues 142 to 152 (FSDEERFDEKK) form a flexible linker region. Residues 153–205 (GSSAELDEALEALRALGYAEREVSRVVPELLKESLTTDQYIKKALSLLLNGKR) form a domain III region.

The protein belongs to the RuvA family. Homotetramer. Forms an RuvA(8)-RuvB(12)-Holliday junction (HJ) complex. HJ DNA is sandwiched between 2 RuvA tetramers; dsDNA enters through RuvA and exits via RuvB. An RuvB hexamer assembles on each DNA strand where it exits the tetramer. Each RuvB hexamer is contacted by two RuvA subunits (via domain III) on 2 adjacent RuvB subunits; this complex drives branch migration. In the full resolvosome a probable DNA-RuvA(4)-RuvB(12)-RuvC(2) complex forms which resolves the HJ.

It is found in the cytoplasm. Functionally, the RuvA-RuvB-RuvC complex processes Holliday junction (HJ) DNA during genetic recombination and DNA repair, while the RuvA-RuvB complex plays an important role in the rescue of blocked DNA replication forks via replication fork reversal (RFR). RuvA specifically binds to HJ cruciform DNA, conferring on it an open structure. The RuvB hexamer acts as an ATP-dependent pump, pulling dsDNA into and through the RuvAB complex. HJ branch migration allows RuvC to scan DNA until it finds its consensus sequence, where it cleaves and resolves the cruciform DNA. The sequence is that of Holliday junction branch migration complex subunit RuvA from Bacillus cereus (strain AH187).